We begin with the raw amino-acid sequence, 350 residues long: Galactokinase (350 aa).

Position 14-17 (14-17) interacts with substrate; the sequence is EHTD. ATP contacts are provided by residues Ser-46 and 96–102; that span reads GAGLSSS. Residues Ser-102 and Glu-134 each coordinate Mg(2+). The Proton acceptor role is filled by Asp-146. Substrate is bound at residue Tyr-196.

This sequence belongs to the GHMP kinase family. GalK subfamily.

It localises to the cytoplasm. It catalyses the reaction alpha-D-galactose + ATP = alpha-D-galactose 1-phosphate + ADP + H(+). It functions in the pathway carbohydrate metabolism; galactose metabolism. Its function is as follows. Catalyzes the transfer of the gamma-phosphate of ATP to D-galactose to form alpha-D-galactose-1-phosphate (Gal-1-P). This chain is Galactokinase, found in Thermotoga maritima (strain ATCC 43589 / DSM 3109 / JCM 10099 / NBRC 100826 / MSB8).